The sequence spans 820 residues: Scavenger receptor class F member 1 (820 aa).

A signal peptide spans 1–23 (MLAAMGLELVFSLLLLWTQGTQG). Over 24 to 422 (STLDPAGQHV…TCQLGRHGKN (399 aa)) the chain is Extracellular. 4 consecutive EGF-like domains span residues 56–90 (TIPI…AQCS), 98–133 (WGHD…RLCE), 163–193 (RRPC…RRCS), and 217–251 (WGPE…IRCE). 12 cysteine pairs are disulfide-bonded: C60–C72, C66–C78, C80–C89, C102–C114, C108–C121, C123–C132, C166–C174, C168–C181, C183–C192, C221–C232, C225–C239, and C241–C250. Residue N291 is glycosylated (N-linked (GlcNAc...) asparagine). EGF-like domains lie at 304 to 341 (FGER…HRCE) and 353 to 384 (CSST…TSCN). A helical transmembrane segment spans residues 423–443 (ALIVGILVPLLLLLMGIVCCA). Residues 444 to 820 (YCCSGTRLDP…VVPMSVPPQH (377 aa)) are Cytoplasmic-facing. 2 disordered regions span residues 549 to 685 (PMAQ…IQES) and 715 to 820 (NYQK…PPQH). Residues S590 and S607 each carry the phosphoserine modification. Over residues 631–648 (QEAEESTGPEQVNTEEDA) the composition is skewed to acidic residues. Residues 650 to 662 (TATSSGDPATSHG) show a composition bias toward polar residues.

In terms of assembly, heterophilic interaction with SREC2 via its extracellular domain. The heterophilic interaction is suppressed by the presence of ligand such as Ac-LDL. Interacts with AVIL; the interaction occurs in embryonic dorsal root ganglions at 18 dpc and induces neurite-like outgrowth. In terms of tissue distribution, expressed weakly in brain, spinal cord and dorsal root ganglions.

It is found in the membrane. Mediates the binding and degradation of acetylated low density lipoprotein (Ac-LDL). Mediates heterophilic interactions, suggesting a function as adhesion protein. Plays a role in the regulation of neurite-like outgrowth. The protein is Scavenger receptor class F member 1 (Scarf1) of Mus musculus (Mouse).